We begin with the raw amino-acid sequence, 2153 residues long: RNA-directed RNA polymerase L (2153 aa).

Residues histidine 36, glutamate 54, aspartate 97, glutamate 110, and valine 111 each coordinate Mn(2+). Lysine 124 (for endonuclease activity) is an active-site residue. One can recognise a RdRp catalytic domain in the interval threonine 957 to methionine 1143. A Mg(2+)-binding site is contributed by aspartate 1100.

It belongs to the Bunyavirales RNA polymerase family. In terms of assembly, interacts with the viral nucleoprotein. Requires Mn(2+) as cofactor. It depends on Mg(2+) as a cofactor.

It localises to the host cytoplasm. Its subcellular location is the host perinuclear region. The catalysed reaction is RNA(n) + a ribonucleoside 5'-triphosphate = RNA(n+1) + diphosphate. In terms of biological role, RNA-dependent RNA polymerase, which is responsible for the replication and transcription of the viral RNA genome using antigenomic RNA as an intermediate. During transcription, synthesizes subgenomic RNAs and assures their capping by a cap-snatching mechanism, which involves the endonuclease activity cleaving the host capped pre-mRNAs. These short capped RNAs are then used as primers for viral transcription. Cleaves ssRNA substrates but not DNA. Seems to downregulate the expression of its own and heterologous mRNAs through its endonuclease activity. The chain is RNA-directed RNA polymerase L from Black Creek Canal orthohantavirus (BCCV).